We begin with the raw amino-acid sequence, 288 residues long: Acetyl-coenzyme A carboxylase carboxyl transferase subunit beta (288 aa).

One can recognise a CoA carboxyltransferase N-terminal domain in the interval 34–288 (LFSKCPACKV…RLLRMHGGVR (255 aa)). Residues Cys38, Cys41, Cys56, and Cys59 each contribute to the Zn(2+) site. Residues 38 to 59 (CPACKVILYKNDLGLEKTCQHC) form a C4-type zinc finger.

The protein belongs to the AccD/PCCB family. Acetyl-CoA carboxylase is a heterohexamer composed of biotin carboxyl carrier protein (AccB), biotin carboxylase (AccC) and two subunits each of ACCase subunit alpha (AccA) and ACCase subunit beta (AccD). Requires Zn(2+) as cofactor.

The protein localises to the cytoplasm. The enzyme catalyses N(6)-carboxybiotinyl-L-lysyl-[protein] + acetyl-CoA = N(6)-biotinyl-L-lysyl-[protein] + malonyl-CoA. Its pathway is lipid metabolism; malonyl-CoA biosynthesis; malonyl-CoA from acetyl-CoA: step 1/1. Its function is as follows. Component of the acetyl coenzyme A carboxylase (ACC) complex. Biotin carboxylase (BC) catalyzes the carboxylation of biotin on its carrier protein (BCCP) and then the CO(2) group is transferred by the transcarboxylase to acetyl-CoA to form malonyl-CoA. This Streptococcus suis (strain 98HAH33) protein is Acetyl-coenzyme A carboxylase carboxyl transferase subunit beta.